The primary structure comprises 310 residues: UDP-N-acetylenolpyruvoylglucosamine reductase (310 aa).

The FAD-binding PCMH-type domain occupies 34–213 (RAGGNAEVLF…LRRMNEITSS (180 aa)). Residue R178 is part of the active site. Catalysis depends on S227, which acts as the Proton donor. E297 is an active-site residue.

This sequence belongs to the MurB family. It depends on FAD as a cofactor.

The protein localises to the cytoplasm. The enzyme catalyses UDP-N-acetyl-alpha-D-muramate + NADP(+) = UDP-N-acetyl-3-O-(1-carboxyvinyl)-alpha-D-glucosamine + NADPH + H(+). It functions in the pathway cell wall biogenesis; peptidoglycan biosynthesis. Its function is as follows. Cell wall formation. The polypeptide is UDP-N-acetylenolpyruvoylglucosamine reductase (Parvibaculum lavamentivorans (strain DS-1 / DSM 13023 / NCIMB 13966)).